Consider the following 532-residue polypeptide: Cytokinin dehydrogenase 8 (532 aa).

An N-terminal signal peptide occupies residues 1–26; the sequence is MELKAMYLYAAVLAVLLCSSVNFIQS. The FAD-binding PCMH-type domain maps to 51–238; that stretch reads VSDAPFAVMR…TRARIPLQLA (188 aa). The FAD site is built by alanine 87, glycine 89, and glycine 91. Residue histidine 92 is modified to Pros-8alpha-FAD histidine. FAD is bound by residues serine 93, glutamine 97, aspartate 162, threonine 167, serine 173, isoleucine 177, and isoleucine 228. A glycan (N-linked (GlcNAc...) asparagine) is linked at asparagine 420. Tyrosine 482 and glutamine 520 together coordinate FAD.

It belongs to the oxygen-dependent FAD-linked oxidoreductase family. As to quaternary structure, monomer. It depends on FAD as a cofactor.

It localises to the secreted. The protein resides in the extracellular space. The catalysed reaction is N(6)-dimethylallyladenine + A + H2O = 3-methyl-2-butenal + adenine + AH2. In terms of biological role, catalyzes the oxidation of cytokinins, a family of N(6)-substituted adenine derivatives that are plant hormones, where the substituent is an isopentenyl group. The polypeptide is Cytokinin dehydrogenase 8 (CKX8) (Oryza sativa subsp. indica (Rice)).